We begin with the raw amino-acid sequence, 807 residues long: Sucrose synthase 2 (807 aa).

The GT-B glycosyltransferase stretch occupies residues 274–752 (MVFNVVILSP…GLKRIYERYT (479 aa)).

The protein belongs to the glycosyltransferase 1 family. Plant sucrose synthase subfamily. As to expression, detected in the whole plant but at lower levels. Predominantly expressed in developing siliques. Also detected in the root tip. Detected in the embryo, endosperm and seed coat (at the protein level).

The protein localises to the cytoplasm. Its subcellular location is the plastid membrane. It catalyses the reaction an NDP-alpha-D-glucose + D-fructose = a ribonucleoside 5'-diphosphate + sucrose + H(+). In terms of biological role, sucrose-cleaving enzyme that provides UDP-glucose and fructose for various metabolic pathways. Modulates metabolic homeostasis and directs carbon towards starch synthesis in developing seeds. This is Sucrose synthase 2 (SUS2) from Arabidopsis thaliana (Mouse-ear cress).